A 344-amino-acid polypeptide reads, in one-letter code: [LysW]-L-2-aminoadipate 6-phosphate reductase (344 aa).

Residues 12 to 15 (SGYA), 36 to 38 (SRR), and L75 each bind NADP(+). The active site involves C148. S180, A184, and N312 together coordinate NADP(+).

This sequence belongs to the NAGSA dehydrogenase family. Type 1 subfamily. LysY sub-subfamily. As to quaternary structure, homotetramer. Interacts with LysW. May form a ternary complex with LysW and LysZ.

The protein resides in the cytoplasm. The enzyme catalyses [amino-group carrier protein]-C-terminal-N-(1-carboxy-5-oxopentan-1-yl)-L-glutamine + phosphate + NADP(+) = [amino-group carrier protein]-C-terminal-N-(1-carboxy-5-phosphooxy-5-oxopentan-1-yl)-L-glutamine + NADPH + H(+). Its pathway is amino-acid biosynthesis; L-lysine biosynthesis via AAA pathway; L-lysine from L-alpha-aminoadipate (Thermus route): step 3/5. In terms of biological role, catalyzes the NADPH-dependent reduction of [LysW]-aminoadipate 6-phosphate to yield [LysW]-aminoadipate 6-semialdehyde. The chain is [LysW]-L-2-aminoadipate 6-phosphate reductase from Thermus thermophilus (strain ATCC BAA-163 / DSM 7039 / HB27).